The following is a 231-amino-acid chain: Beta-casein (231 aa).

An N-terminal signal peptide occupies residues 1–15 (MKVFILACLVALALA). Residue S24 is modified to Phosphoserine. T27 carries the phosphothreonine modification. 3 positions are modified to phosphoserine: S29, S31, and S32.

The protein belongs to the beta-casein family. In terms of tissue distribution, mammary gland specific. Secreted in milk.

It localises to the secreted. Functionally, important role in determination of the surface properties of the casein micelles. This Rattus norvegicus (Rat) protein is Beta-casein (Csn2).